We begin with the raw amino-acid sequence, 54 residues long: Large ribosomal subunit protein bL33C (54 aa).

It belongs to the bacterial ribosomal protein bL33 family.

In Streptomyces griseus subsp. griseus (strain JCM 4626 / CBS 651.72 / NBRC 13350 / KCC S-0626 / ISP 5235), this protein is Large ribosomal subunit protein bL33C.